A 467-amino-acid polypeptide reads, in one-letter code: Cysteine--tRNA ligase (467 aa).

Cys29 contributes to the Zn(2+) binding site. Positions 31-41 match the 'HIGH' region motif; the sequence is PTVYNYVHIGN. The Zn(2+) site is built by Cys209, His234, and Glu238. The short motif at 267–271 is the 'KMSKS' region element; sequence KMSKS. Lys270 is a binding site for ATP.

This sequence belongs to the class-I aminoacyl-tRNA synthetase family. Monomer. The cofactor is Zn(2+).

The protein resides in the cytoplasm. The enzyme catalyses tRNA(Cys) + L-cysteine + ATP = L-cysteinyl-tRNA(Cys) + AMP + diphosphate. This Xylella fastidiosa (strain Temecula1 / ATCC 700964) protein is Cysteine--tRNA ligase.